Consider the following 431-residue polypeptide: Islet cell autoantigen 1-like protein (431 aa).

The AH domain maps to 44–247 (ASDAELDAKL…TAQMMTQIQE (204 aa)). 2 disordered regions span residues 295–316 (EEEE…PRDS) and 351–372 (CGSP…SLTS). A compositionally biased stretch (basic and acidic residues) spans 301-316 (RFEREPAVARALPRDS). A compositionally biased stretch (polar residues) spans 356–372 (TGLTSQEPSVGPGSLTS).

The protein is Islet cell autoantigen 1-like protein (Ica1l) of Mus musculus (Mouse).